Reading from the N-terminus, the 291-residue chain is uncharacterized protein (291 aa).

3 disordered regions span residues M1–K62, P220–V242, and E255–K291. Basic and acidic residues predominate over residues E18 to S41. Composition is skewed to polar residues over residues E42 to D58 and P226 to P236. S267 carries the phosphoserine modification.

It localises to the cytoplasm. The protein resides in the nucleus. This is an uncharacterized protein from Saccharomyces cerevisiae (strain ATCC 204508 / S288c) (Baker's yeast).